The following is a 344-amino-acid chain: Trace amine-associated receptor 8a (344 aa).

The Extracellular segment spans residues 1 to 33 (MTSNFSQAPLQLCYENVNASCIKTPYSPGLRVL). N-linked (GlcNAc...) asparagine glycosylation is found at Asn4 and Asn18. 2 disulfide bridges follow: Cys21–Cys185 and Cys96–Cys189. A helical membrane pass occupies residues 34 to 54 (LYMVFGFGAVLAVCGNLLVVI). Over 55–67 (SVLHFKQLHSPAN) the chain is Cytoplasmic. A helical membrane pass occupies residues 68–88 (FLIASLASADFLVGISVMPFS). The Extracellular segment spans residues 89–102 (MVRSIESCWYFGDT). A helical transmembrane segment spans residues 103 to 127 (FCSLHSCCDAAFCYSSLFHLCFISV). Residues 128–146 (DRYIAVTDPLVYPTKFTVS) are Cytoplasmic-facing. The helical transmembrane segment at 147-167 (VSGICISISWILPLVYSSAVF) threads the bilayer. Residues 168–196 (YTGISATGIENLVSALNCVGGCQIVVNQD) are Extracellular-facing. The chain crosses the membrane as a helical span at residues 197 to 217 (WVLIDFLLFLIPTLVMIILYS). Residues 218–260 (KIFLVAKQQAVKIETSISGSKGESSLESHKARVAKRERKAAKT) are Cytoplasmic-facing. Residues 261–281 (LGVTVVAFMVSWLPYTIDTLI) traverse the membrane as a helical segment. The Extracellular portion of the chain corresponds to 282-291 (DAFMGFITPA). A helical transmembrane segment spans residues 292–314 (YVYEICCWSAYYNSAMNPLIYAF). Residues 315–344 (FYPWFRKAIKLILSGEILKSHSSTMSLFSE) lie on the Cytoplasmic side of the membrane.

The protein belongs to the G-protein coupled receptor 1 family.

The protein resides in the cell membrane. Its function is as follows. Olfactory receptor activated by trace amines. Trace amine compounds are enriched in animal body fluids and act on trace amine-associated receptors (TAARs) to elicit both intraspecific and interspecific innate behaviors. Ligand-binding causes a conformation change that triggers signaling via G(s)-class of G alpha proteins (GNAL or GNAS). The protein is Trace amine-associated receptor 8a of Rattus norvegicus (Rat).